Reading from the N-terminus, the 432-residue chain is Ribosomal protein uS12 methylthiotransferase RimO (432 aa).

In terms of domain architecture, MTTase N-terminal spans isoleucine 2–lysine 115. Residues cysteine 11, cysteine 47, cysteine 78, cysteine 151, cysteine 155, and cysteine 158 each coordinate [4Fe-4S] cluster. The 231-residue stretch at glutamate 137–alanine 367 folds into the Radical SAM core domain.

This sequence belongs to the methylthiotransferase family. RimO subfamily. The cofactor is [4Fe-4S] cluster.

It localises to the cytoplasm. The catalysed reaction is L-aspartate(89)-[ribosomal protein uS12]-hydrogen + (sulfur carrier)-SH + AH2 + 2 S-adenosyl-L-methionine = 3-methylsulfanyl-L-aspartate(89)-[ribosomal protein uS12]-hydrogen + (sulfur carrier)-H + 5'-deoxyadenosine + L-methionine + A + S-adenosyl-L-homocysteine + 2 H(+). In terms of biological role, catalyzes the methylthiolation of an aspartic acid residue of ribosomal protein uS12. The sequence is that of Ribosomal protein uS12 methylthiotransferase RimO from Moorella thermoacetica (strain ATCC 39073 / JCM 9320).